The primary structure comprises 224 residues: Transcription factor MYB1 (224 aa).

HTH myb-type domains follow at residues 10–66 (LGRV…KPSI) and 67–117 (KRGH…YKKH). DNA-binding regions (H-T-H motif) lie at residues 38–62 (WKRVPERAGLNRCRKSCRWRWLNYL) and 90–113 (WSLIAAKLPGRTINDVKNYCNTHL).

Its subcellular location is the nucleus. Activates DODA1 and CYP76AD1 in the betalain red pigment pathway. This chain is Transcription factor MYB1, found in Beta vulgaris (Sugar beet).